A 201-amino-acid chain; its full sequence is Peptidyl-tRNA hydrolase (201 aa).

Y14 contacts tRNA. Catalysis depends on H19, which acts as the Proton acceptor. TRNA-binding residues include Y64, N66, and N112.

Belongs to the PTH family. As to quaternary structure, monomer.

The protein resides in the cytoplasm. The enzyme catalyses an N-acyl-L-alpha-aminoacyl-tRNA + H2O = an N-acyl-L-amino acid + a tRNA + H(+). Its function is as follows. Hydrolyzes ribosome-free peptidyl-tRNAs (with 1 or more amino acids incorporated), which drop off the ribosome during protein synthesis, or as a result of ribosome stalling. Functionally, catalyzes the release of premature peptidyl moieties from peptidyl-tRNA molecules trapped in stalled 50S ribosomal subunits, and thus maintains levels of free tRNAs and 50S ribosomes. This Afipia carboxidovorans (strain ATCC 49405 / DSM 1227 / KCTC 32145 / OM5) (Oligotropha carboxidovorans) protein is Peptidyl-tRNA hydrolase.